A 59-amino-acid chain; its full sequence is UPF0434 protein SO_2800 (59 aa).

It belongs to the UPF0434 family.

In Shewanella oneidensis (strain ATCC 700550 / JCM 31522 / CIP 106686 / LMG 19005 / NCIMB 14063 / MR-1), this protein is UPF0434 protein SO_2800.